Consider the following 338-residue polypeptide: Probable replication factor C subunit 2 (338 aa).

Residue 60–67 (GPPGTGKT) participates in ATP binding.

It belongs to the activator 1 small subunits family. In terms of assembly, heteropentamer of various rfc subunits that forms a complex (RFC) with PCNA in the presence of ATP.

The protein localises to the nucleus. Its function is as follows. The elongation of primed DNA templates by DNA polymerase delta and epsilon requires the action of the accessory proteins PCNA and activator 1. This is Probable replication factor C subunit 2 (rfc2) from Dictyostelium discoideum (Social amoeba).